Here is a 217-residue protein sequence, read N- to C-terminus: MILVLGVFKIEVEPMLKEMEVLEKGRLLKRYYQRGVVGRNEVVVSYGFIGKVEAALVTQAFLDRFNIDAVFLTGNAGGLEGVEVGDVVIGDSYVEYDFETALGDEGIIVSGSEDLEDKVIAYSNREIKTGLIASGDAFVTVKEKAEEIKRRTGALCVDMDSAAVAKVCYENEKKFLAIKTIVDICGRETEEEFRKNYERYGFLSNLILLDVLKKCVF.

The active-site Proton acceptor is the Glu-11. Substrate contacts are provided by residues Gly-77, Val-139, and 159–160 (MD). Asp-183 (proton donor) is an active-site residue.

The protein belongs to the PNP/UDP phosphorylase family. MtnN subfamily.

It catalyses the reaction S-adenosyl-L-homocysteine + H2O = S-(5-deoxy-D-ribos-5-yl)-L-homocysteine + adenine. The catalysed reaction is S-methyl-5'-thioadenosine + H2O = 5-(methylsulfanyl)-D-ribose + adenine. It carries out the reaction 5'-deoxyadenosine + H2O = 5-deoxy-D-ribose + adenine. The protein operates within amino-acid biosynthesis; L-methionine biosynthesis via salvage pathway; S-methyl-5-thio-alpha-D-ribose 1-phosphate from S-methyl-5'-thioadenosine (hydrolase route): step 1/2. Catalyzes the irreversible cleavage of the glycosidic bond in both 5'-methylthioadenosine (MTA) and S-adenosylhomocysteine (SAH/AdoHcy) to adenine and the corresponding thioribose, 5'-methylthioribose and S-ribosylhomocysteine, respectively. Also cleaves 5'-deoxyadenosine, a toxic by-product of radical S-adenosylmethionine (SAM) enzymes, into 5-deoxyribose and adenine. The sequence is that of 5'-methylthioadenosine/S-adenosylhomocysteine nucleosidase (mtnN) from Thermotoga maritima (strain ATCC 43589 / DSM 3109 / JCM 10099 / NBRC 100826 / MSB8).